The following is a 371-amino-acid chain: Isopentenyl-diphosphate delta-isomerase (371 aa).

Residue 9 to 10 (RK) coordinates substrate. FMN is bound by residues Thr66, 67 to 69 (GMT), Ser100, and Asn128. Position 100–102 (100–102 (SQR)) interacts with substrate. Residue Gln167 participates in substrate binding. Glu168 lines the Mg(2+) pocket. FMN-binding positions include Lys199, Ser224, Thr229, 278 to 280 (GMR), and 299 to 300 (AL).

It belongs to the IPP isomerase type 2 family. In terms of assembly, homooctamer. Dimer of tetramers. The cofactor is FMN. Requires NADPH as cofactor. It depends on Mg(2+) as a cofactor.

The protein localises to the cytoplasm. The catalysed reaction is isopentenyl diphosphate = dimethylallyl diphosphate. Involved in the biosynthesis of isoprenoids. Catalyzes the 1,3-allylic rearrangement of the homoallylic substrate isopentenyl (IPP) to its allylic isomer, dimethylallyl diphosphate (DMAPP). In Pyrococcus horikoshii (strain ATCC 700860 / DSM 12428 / JCM 9974 / NBRC 100139 / OT-3), this protein is Isopentenyl-diphosphate delta-isomerase.